We begin with the raw amino-acid sequence, 1240 residues long: Pectate lyase L (1240 aa).

A signal peptide spans Met1 to Ala26. Has catalytic activity regions lie at residues Glu27 to Arg551 and Thr545 to Lys1240. The Ca(2+) site is built by Asp325, Glu349, Asp350, Asp1049, Asp1073, Asp1074, and Asp1077. The active-site Proton acceptor is Lys1117.

The protein belongs to the polysaccharide lyase 9 family. Ca(2+) serves as cofactor.

The protein resides in the secreted. It catalyses the reaction Eliminative cleavage of (1-&gt;4)-alpha-D-galacturonan to give oligosaccharides with 4-deoxy-alpha-D-galact-4-enuronosyl groups at their non-reducing ends.. Its activity is regulated as follows. Inhibited by the metal chelator ethylenediaminetetraacetic acid (EDTA). Cleaves polygalacturonate or partially methylated pectin. When assayed on polygalacturonate or on pectin, it releases monogalacturonate as the principal product. This is Pectate lyase L from Thermoclostridium stercorarium (Clostridium stercorarium).